The primary structure comprises 336 residues: Protein YIPF3 (336 aa).

Positions 1–73 (MSAPGGGRSG…AGAGGEEDGE (73 aa)) are disordered. At 1–143 (MSAPGGGRSG…PVKMINFPQK (143 aa)) the chain is on the cytoplasmic side. The segment covering 55 to 73 (EEEEEAEGEAGAGGEEDGE) has biased composition (acidic residues). The chain crosses the membrane as a helical span at residues 144–164 (IAGELYGPLMLVFTLVAILLH). At 165-182 (GMKTSDTIIREGTLMGTA) the chain is on the lumenal side. Residues 183–203 (IGTCFGYWLGVSSFIYFLAYL) form a helical membrane-spanning segment. At 204–209 (CNAQIT) the chain is on the cytoplasmic side. The helical transmembrane segment at 210 to 230 (MVQMLSLLGYGLFGHCITLLV) threads the bilayer. At 231-239 (TYNIHFHSL) the chain is on the lumenal side. Residues 240-260 (FYIFWLVVGGLSTLRMVAVLV) form a helical membrane-spanning segment. At 261–269 (SRTVGHTQR) the chain is on the cytoplasmic side. The helical transmembrane segment at 270–290 (LILCGTLAALHMLFLLYLHFA) threads the bilayer. Residues 291–336 (YHKVVEGILDTLEGPNMPPFQRVARDIPVVSNAVLNTTAKANAMTL) lie on the Lumenal side of the membrane. N-linked (GlcNAc...) asparagine glycosylation occurs at Asn-326.

It belongs to the YIP1 family.

The protein localises to the cell membrane. The protein resides in the golgi apparatus. It localises to the cis-Golgi network membrane. It is found in the cytoplasm. Involved in the maintenance of the Golgi structure. May play a role in hematopoiesis. This chain is Protein YIPF3 (YIPF3), found in Gallus gallus (Chicken).